We begin with the raw amino-acid sequence, 196 residues long: Ribonuclease HII (196 aa).

The RNase H type-2 domain maps to 9–196 (NLIAGVDEVG…APVKRALNLV (188 aa)). Positions 15, 16, and 107 each coordinate a divalent metal cation.

It belongs to the RNase HII family. Requires Mn(2+) as cofactor. The cofactor is Mg(2+).

It localises to the cytoplasm. It catalyses the reaction Endonucleolytic cleavage to 5'-phosphomonoester.. Its function is as follows. Endonuclease that specifically degrades the RNA of RNA-DNA hybrids. This Proteus mirabilis (strain HI4320) protein is Ribonuclease HII.